A 159-amino-acid chain; its full sequence is Cyclic pyranopterin monophosphate synthase (159 aa).

Residues 76 to 78 and 114 to 115 contribute to the substrate site; these read LCH and ME. D129 is an active-site residue.

This sequence belongs to the MoaC family. In terms of assembly, homohexamer; trimer of dimers.

It carries out the reaction (8S)-3',8-cyclo-7,8-dihydroguanosine 5'-triphosphate = cyclic pyranopterin phosphate + diphosphate. It participates in cofactor biosynthesis; molybdopterin biosynthesis. Functionally, catalyzes the conversion of (8S)-3',8-cyclo-7,8-dihydroguanosine 5'-triphosphate to cyclic pyranopterin monophosphate (cPMP). The chain is Cyclic pyranopterin monophosphate synthase from Shewanella oneidensis (strain ATCC 700550 / JCM 31522 / CIP 106686 / LMG 19005 / NCIMB 14063 / MR-1).